The following is a 206-amino-acid chain: MTKGILGRKIGMTQVFAENGEVIPVTVIEAEPNIVLQKKTVESDGYEAIQIGFADAKKPNKPATGHAAKAETAPKRFIKEIRGVNLDEVEVGQAINVTTFAAGDLVDVTGTSKGKGFQGAIKRHNQSRGPMSHGSRYHRRPGSMGPVAPNRVFKGKALPGRMGGEQITMQNLEIVRVDEERNLLLVKGNVPGAKKSYVTVQSAVKA.

Positions 116–149 are disordered; it reads GFQGAIKRHNQSRGPMSHGSRYHRRPGSMGPVAP.

The protein belongs to the universal ribosomal protein uL3 family. In terms of assembly, part of the 50S ribosomal subunit. Forms a cluster with proteins L14 and L19.

In terms of biological role, one of the primary rRNA binding proteins, it binds directly near the 3'-end of the 23S rRNA, where it nucleates assembly of the 50S subunit. The sequence is that of Large ribosomal subunit protein uL3 from Shouchella clausii (strain KSM-K16) (Alkalihalobacillus clausii).